A 218-amino-acid polypeptide reads, in one-letter code: Ribose-5-phosphate isomerase A (218 aa).

Substrate-binding positions include 28–31 (TGST), 81–84 (DGAD), and 94–97 (KGGG). Glu103 (proton acceptor) is an active-site residue. Lys121 serves as a coordination point for substrate.

This sequence belongs to the ribose 5-phosphate isomerase family. Homodimer.

It carries out the reaction aldehydo-D-ribose 5-phosphate = D-ribulose 5-phosphate. It participates in carbohydrate degradation; pentose phosphate pathway; D-ribose 5-phosphate from D-ribulose 5-phosphate (non-oxidative stage): step 1/1. In terms of biological role, catalyzes the reversible conversion of ribose-5-phosphate to ribulose 5-phosphate. This Vibrio cholerae serotype O1 (strain ATCC 39541 / Classical Ogawa 395 / O395) protein is Ribose-5-phosphate isomerase A.